A 441-amino-acid chain; its full sequence is MSIDIDWERATSGPDGELLAERIRSFIHDKFQQMVLPRFIRSVQVTSFNFGTIPPELEIRDLTDPFPDFYEDGDEDLSVSSEEQSPMREQADRYRERIDSWQTNSPGSLEGQMSGRMGFGHPLQLAPDEDGSRLHPLRSPINLGDINPYLFPRSGTPGIPGGTSNLGYFMPLSGLSGSQVPLRAVTRGNPFSGGWPDSPLENEKRIGHGQGPPRRRSEVDVDAIQSRPSTANTGNTLLSRGSVSTGDPRHSHPSQTLLANNPGQVPDANDSPVSAVPPLSGTPPRRMREQKAEDFQVFCRTKYAGNISLSLTAEILLDYPMPSFVGLPLKLNITGLTFDAVAVLAYIRRRIHFCFLSPEDADALIGPETGAGGGDTMEPNSLRRKNLSLLRKIRVESEIGRKENGKQALKNVGKVEKFVLEQVRRIFEEEFVYPSFWTFLV.

Residues 1 to 441 (MSIDIDWERA…VYPSFWTFLV (441 aa)) form the SMP-LTD domain. 2 disordered regions span residues 68-89 (DFYE…PMRE) and 183-289 (RAVT…RMRE). 2 stretches are compositionally biased toward polar residues: residues 226–245 (SRPS…SVST) and 253–263 (PSQTLLANNPG).

It belongs to the MDM12 family. Component of the ER-mitochondria encounter structure (ERMES) or MDM complex, composed of MMM1, MDM10, MDM12 and MDM34. An MMM1 homodimer associates with one molecule of MDM12 on each side in a pairwise head-to-tail manner, and the SMP-LTD domains of MMM1 and MDM12 generate a continuous hydrophobic tunnel for phospholipid trafficking.

The protein resides in the mitochondrion outer membrane. It is found in the endoplasmic reticulum membrane. In terms of biological role, component of the ERMES/MDM complex, which serves as a molecular tether to connect the endoplasmic reticulum (ER) and mitochondria. Components of this complex are involved in the control of mitochondrial shape and protein biogenesis, and function in nonvesicular lipid trafficking between the ER and mitochondria. MDM12 is required for the interaction of the ER-resident membrane protein MMM1 and the outer mitochondrial membrane-resident beta-barrel protein MDM10. The MDM12-MMM1 subcomplex functions in the major beta-barrel assembly pathway that is responsible for biogenesis of all mitochondrial outer membrane beta-barrel proteins, and acts in a late step after the SAM complex. The MDM10-MDM12-MMM1 subcomplex further acts in the TOM40-specific pathway after the action of the MDM12-MMM1 complex. Essential for establishing and maintaining the structure of mitochondria and maintenance of mtDNA nucleoids. The protein is Mitochondrial distribution and morphology protein 12 of Paracoccidioides lutzii (strain ATCC MYA-826 / Pb01) (Paracoccidioides brasiliensis).